The chain runs to 411 residues: Thyroid hormone receptor beta (411 aa).

A disordered region spans residues 1-24 (MTPNSMTENGLPAWDKPKPCPDGE). A modulating region spans residues 1–104 (MTPNSMTENG…IPSYLDKDEL (104 aa)). Over residues 15-24 (DKPKPCPDGE) the composition is skewed to basic and acidic residues. Zn(2+)-binding residues include C105, C108, C122, C125, C143, C149, C159, and C162. 2 NR C4-type zinc fingers span residues 105–125 (CVVC…CEGC) and 143–167 (CKYE…FKKC). Residues 105–179 (CVVCGDKATG…VGMATDLVLD (75 aa)) constitute a DNA-binding region (nuclear receptor). The NR LBD domain maps to 215 to 411 (QEWELIKTVT…EHYINYRRNS (197 aa)). Residues 242–411 (KFLPEDIGQA…EHYINYRRNS (170 aa)) are interaction with NR2F6. The 3,3',5-triiodo-L-thyronine site is built by R280 and N329. L-thyroxine-binding residues include R280 and N329.

This sequence belongs to the nuclear hormone receptor family. NR1 subfamily. As to quaternary structure, binds DNA as a dimer; homodimer and heterodimer with RXRA. Interacts with the coactivators NCOA1/SRC1, NCOA2/GRIP1, NCOA7 and MED1/TRAP220 in a ligand-inducible manner. Interacts with the corepressor NCOR1 in absence of ligand. Interacts with C1D. Interacts with NR2F6; the interaction impairs the binding of the THRB homodimer and THRB:RXRB heterodimer to T3 response elements. Interacts with PRMT2 and THRSP. Interacts with TACC1; this interaction is decreased in the presence of thyroid hormone T3.

The protein localises to the nucleus. Nuclear hormone receptor that can act as a repressor or activator of transcription. High affinity receptor for thyroid hormones, including triiodothyronine and thyroxine. The protein is Thyroid hormone receptor beta (THRB) of Ovis aries (Sheep).